A 403-amino-acid polypeptide reads, in one-letter code: Phosphopentomutase (403 aa).

Aspartate 13, aspartate 298, histidine 303, aspartate 339, histidine 340, and histidine 351 together coordinate Mn(2+).

This sequence belongs to the phosphopentomutase family. The cofactor is Mn(2+).

It localises to the cytoplasm. The catalysed reaction is 2-deoxy-alpha-D-ribose 1-phosphate = 2-deoxy-D-ribose 5-phosphate. It carries out the reaction alpha-D-ribose 1-phosphate = D-ribose 5-phosphate. Its pathway is carbohydrate degradation; 2-deoxy-D-ribose 1-phosphate degradation; D-glyceraldehyde 3-phosphate and acetaldehyde from 2-deoxy-alpha-D-ribose 1-phosphate: step 1/2. Isomerase that catalyzes the conversion of deoxy-ribose 1-phosphate (dRib-1-P) and ribose 1-phosphate (Rib-1-P) to deoxy-ribose 5-phosphate (dRib-5-P) and ribose 5-phosphate (Rib-5-P), respectively. This Streptococcus suis (strain 05ZYH33) protein is Phosphopentomutase.